Consider the following 2410-residue polypeptide: Genome polyprotein 1 (2410 aa).

The tract at residues methionine 1 to glutamate 21 is disordered. Residues alanine 474–glutamate 632 enclose the Helicase ATP-binding domain. Glycine 487 to serine 494 serves as a coordination point for ATP. Positions aspartate 583 to histidine 586 match the DEAH box motif. One can recognise a Helicase C-terminal domain in the interval glycine 647–phenylalanine 813. Tyrosine 1234 bears the O-(5'-phospho-RNA)-tyrosine mark. One can recognise a Peptidase C4 domain in the interval isoleucine 1359–phenylalanine 1573. Residues histidine 1404, aspartate 1440, and cysteine 1507 each act as for nuclear inclusion protein A activity in the active site. The RdRp catalytic domain occupies tryptophan 1857 to phenylalanine 1980. The disordered stretch occupies residues methionine 2175–tryptophan 2200.

It belongs to the bymoviruses polyprotein 1 family. In terms of processing, VPg is uridylylated by the polymerase and is covalently attached to the 5'-end of the genomic RNA. This uridylylated form acts as a nucleotide-peptide primer for the polymerase. Post-translationally, the viral RNA1 of bymoviruses is expressed as a single polyprotein which undergoes post-translational proteolytic processing by the main proteinase NIa-pro resulting in the production of at least eight individual proteins.

It localises to the host cytoplasmic vesicle. The protein localises to the virion. The enzyme catalyses RNA(n) + a ribonucleoside 5'-triphosphate = RNA(n+1) + diphosphate. The catalysed reaction is Hydrolyzes glutaminyl bonds, and activity is further restricted by preferences for the amino acids in P6 - P1' that vary with the species of potyvirus, e.g. Glu-Xaa-Xaa-Tyr-Xaa-Gln-|-(Ser or Gly) for the enzyme from tobacco etch virus. The natural substrate is the viral polyprotein, but other proteins and oligopeptides containing the appropriate consensus sequence are also cleaved.. Functionally, indispensable for virus replication. Its function is as follows. Mediates the cap-independent, EIF4E-dependent translation of viral genomic RNAs. Binds to the cap-binding site of host EIF4E and thus interferes with the host EIF4E-dependent mRNA export and translation. VPg-RNA directly binds EIF4E and is a template for transcription. Also forms trimeric complexes with EIF4E-EIF4G, which are templates for translation. In terms of biological role, has RNA-binding and proteolytic activities. An RNA-dependent RNA polymerase that plays an essential role in the virus replication. The protein is Genome polyprotein 1 of Hordeum vulgare (Barley).